The sequence spans 188 residues: MGLKADSWIKKMSLEHGMISPFCEKQVGKNVISYGLSSYGYDIRVGGEFMLFDNKNALIDPKNFDPNNATKIDACKEGYFILPANAFALAHTIEYFKMPKDTLAICLGKSTYARCGIIVNVTPFEPEFEGYITIEISNTTNLPAKVYANEGIAQVVFLQGDEVCEQSYKDRGGKYQGQVGITLPKILK.

109–114 (KSTYAR) lines the dCTP pocket. The active-site Proton donor/acceptor is the glutamate 135. 3 residues coordinate dCTP: glutamine 154, tyrosine 168, and glutamine 178.

Belongs to the dCTP deaminase family. As to quaternary structure, homotrimer.

It carries out the reaction dCTP + H2O + H(+) = dUTP + NH4(+). It functions in the pathway pyrimidine metabolism; dUMP biosynthesis; dUMP from dCTP (dUTP route): step 1/2. Its function is as follows. Catalyzes the deamination of dCTP to dUTP. The sequence is that of dCTP deaminase from Helicobacter acinonychis (strain Sheeba).